Reading from the N-terminus, the 345-residue chain is S-adenosylmethionine:tRNA ribosyltransferase-isomerase (345 aa).

This sequence belongs to the QueA family. As to quaternary structure, monomer.

It is found in the cytoplasm. It catalyses the reaction 7-aminomethyl-7-carbaguanosine(34) in tRNA + S-adenosyl-L-methionine = epoxyqueuosine(34) in tRNA + adenine + L-methionine + 2 H(+). Its pathway is tRNA modification; tRNA-queuosine biosynthesis. Functionally, transfers and isomerizes the ribose moiety from AdoMet to the 7-aminomethyl group of 7-deazaguanine (preQ1-tRNA) to give epoxyqueuosine (oQ-tRNA). In Thermodesulfovibrio yellowstonii (strain ATCC 51303 / DSM 11347 / YP87), this protein is S-adenosylmethionine:tRNA ribosyltransferase-isomerase.